We begin with the raw amino-acid sequence, 346 residues long: NADH-ubiquinone oxidoreductase chain 2 (346 aa).

The next 11 helical transmembrane spans lie at 1 to 21 (MNPHAKLISLISLLLGTTITI), 25 to 45 (HWIMAWTGLEINTLAIIPLIS), 60 to 80 (FLVQAAASALVLFSSMSNAWA), 96 to 116 (MLLTAAIAIKLGLVPFHFWFP), 124 to 144 (LTTALLLSTLMKLPPMAILLM), 149 to 169 (LNPTVLTSMALASAALGGWMG), 178 to 198 (ILAFSSIAHLGWMTMIIIYNP), 200 to 220 (LTLLTFYLYILMTATVFLSLN), 242 to 262 (AALMLTLLSLAGLPPLTGFMP), 274 to 294 (EMTTVATIIALLSLLGLFFYL), and 325 to 345 (IAILSSLSAILLPISPMILAA).

Belongs to the complex I subunit 2 family.

It is found in the mitochondrion inner membrane. The enzyme catalyses a ubiquinone + NADH + 5 H(+)(in) = a ubiquinol + NAD(+) + 4 H(+)(out). Core subunit of the mitochondrial membrane respiratory chain NADH dehydrogenase (Complex I) that is believed to belong to the minimal assembly required for catalysis. Complex I functions in the transfer of electrons from NADH to the respiratory chain. The immediate electron acceptor for the enzyme is believed to be ubiquinone. This Struthio camelus (Common ostrich) protein is NADH-ubiquinone oxidoreductase chain 2 (MT-ND2).